Reading from the N-terminus, the 84-residue chain is Large ribosomal subunit protein eL34 (84 aa).

Belongs to the eukaryotic ribosomal protein eL34 family.

This Pyrobaculum islandicum (strain DSM 4184 / JCM 9189 / GEO3) protein is Large ribosomal subunit protein eL34.